Here is a 432-residue protein sequence, read N- to C-terminus: Adenylosuccinate synthetase (432 aa).

Residues 13–19 (GDEGKGK) and 41–43 (GHT) each bind GTP. D14 acts as the Proton acceptor in catalysis. Mg(2+)-binding residues include D14 and G41. IMP is bound by residues 14-17 (DEGK), 39-42 (NAGH), T130, R144, Q225, T240, and R304. The active-site Proton donor is the H42. Residue 300–306 (ATTGRKR) participates in substrate binding. Residues R306, 332-334 (KLD), and 415-417 (STG) contribute to the GTP site.

Belongs to the adenylosuccinate synthetase family. In terms of assembly, homodimer. It depends on Mg(2+) as a cofactor.

The protein localises to the cytoplasm. It carries out the reaction IMP + L-aspartate + GTP = N(6)-(1,2-dicarboxyethyl)-AMP + GDP + phosphate + 2 H(+). The protein operates within purine metabolism; AMP biosynthesis via de novo pathway; AMP from IMP: step 1/2. Its function is as follows. Plays an important role in the de novo pathway of purine nucleotide biosynthesis. Catalyzes the first committed step in the biosynthesis of AMP from IMP. This is Adenylosuccinate synthetase from Vibrio cholerae serotype O1 (strain M66-2).